We begin with the raw amino-acid sequence, 257 residues long: Beta-fibrinogenase mucrofibrase-4 (257 aa).

An N-terminal signal peptide occupies residues 1 to 18 (MVLIRVLANLLILQLSYA). Positions 19-24 (QKSSEL) are excised as a propeptide. Positions 25–248 (VIGGDECNIN…HLDWIKGFIA (224 aa)) constitute a Peptidase S1 domain. 6 cysteine pairs are disulfide-bonded: C31/C162, C49/C65, C97/C255, C141/C209, C173/C188, and C199/C224. Active-site charge relay system residues include H64 and D109. S203 (charge relay system) is an active-site residue.

The protein belongs to the peptidase S1 family. Snake venom subfamily. Monomer. Expressed by the venom gland.

The protein resides in the secreted. Functionally, snake venom serine protease with fibrinogenolytic activities. Cleaves beta-chain of fibrinogen (FGB) efficiently and shows relatively lower activity on alpha-chain. In Protobothrops mucrosquamatus (Taiwan habu), this protein is Beta-fibrinogenase mucrofibrase-4.